Reading from the N-terminus, the 131-residue chain is Profilin (131 aa).

Belongs to the profilin family. Occurs in many kinds of cells as a complex with monomeric actin in a 1:1 ratio.

It localises to the cytoplasm. The protein resides in the cytoskeleton. Binds to actin and affects the structure of the cytoskeleton. At high concentrations, profilin prevents the polymerization of actin, whereas it enhances it at low concentrations. By binding to PIP2, it inhibits the formation of IP3 and DG. This is Profilin from Prunus persica (Peach).